The sequence spans 684 residues: Protein SEEDLING PLASTID DEVELOPMENT 1 (684 aa).

A chloroplast-targeting transit peptide spans 1–78 (MRALNSRLVL…FSFDVRSPSS (78 aa)). Positions 33-91 (SDSSSSFRRTRGARQRIASSKSPASSPSPVRRPSDGFSFDVRSPSSDSSISSRKSPTTA) are disordered. The span at 50–88 (ASSKSPASSPSPVRRPSDGFSFDVRSPSSDSSISSRKSP) shows a compositional bias: low complexity. An ATP-binding site is contributed by 220–227 (GSPGVGKT). Positions 651–684 (PRRSTKKTLTSSSPQKSADGSMGTTGTRLPFLKD) are disordered. The span at 657-667 (KTLTSSSPQKS) shows a compositional bias: low complexity.

This sequence belongs to the ycf45 family.

Its subcellular location is the plastid. It is found in the chloroplast membrane. The protein localises to the chloroplast envelope. Its function is as follows. Required during eoplast (a highly reduced plastid type present during the degreening and dehydration stages of seed maturation) development in embryos and early stages of eoplast redifferentiation during seedling growth. The sequence is that of Protein SEEDLING PLASTID DEVELOPMENT 1 from Arabidopsis thaliana (Mouse-ear cress).